Here is a 446-residue protein sequence, read N- to C-terminus: Peroxisomal biogenesis factor 3 (446 aa).

Over Met-1–Lys-12 the chain is Peroxisomal. Residues Leu-13 to Ala-33 traverse the membrane as a helical segment. The Cytoplasmic segment spans residues Ala-34–Val-446. The tract at residues Arg-101 to Ser-122 is disordered.

The protein belongs to the peroxin-3 family.

It is found in the peroxisome membrane. Involved in peroxisome biosynthesis. This Eremothecium gossypii (strain ATCC 10895 / CBS 109.51 / FGSC 9923 / NRRL Y-1056) (Yeast) protein is Peroxisomal biogenesis factor 3 (PEX3).